Consider the following 420-residue polypeptide: RING finger protein 39 (420 aa).

The RING-type zinc-finger motif lies at cysteine 88–glycine 135. One can recognise a B30.2/SPRY domain in the interval aspartate 210 to serine 420.

In terms of tissue distribution, expressed in testis.

The protein localises to the cytoplasm. It catalyses the reaction S-ubiquitinyl-[E2 ubiquitin-conjugating enzyme]-L-cysteine + [acceptor protein]-L-lysine = [E2 ubiquitin-conjugating enzyme]-L-cysteine + N(6)-ubiquitinyl-[acceptor protein]-L-lysine.. The protein operates within protein modification; protein ubiquitination. Plays an inhibitory role in anti-RNA viral innate immunity by targeting the adapter DDX3X and promoting its 'Lys-48'-linked polyubiquitination. Alternatively, enhances the cGAS-STING pathway activation by promoting 'Lys-63'-linked ubiquitination of STING1, facilitating the STING1-TBK1 complex formation and STING1 activation. In terms of biological role, (Microbial infection) Plays a positive role in human immunodeficiency virus (HIV-1) replication. In Homo sapiens (Human), this protein is RING finger protein 39 (RNF39).